A 576-amino-acid chain; its full sequence is Apolipoprotein N-acyltransferase 1 (576 aa).

Transmembrane regions (helical) follow at residues 15–35 (LILC…FSFF), 38–58 (GVFA…TSIW), 60–80 (AFLW…YWIP), 92–112 (FVSI…FFLF), 128–148 (YILL…FQIF), 168–188 (ICGV…FLIL), and 204–224 (IASL…IGYI). A CN hydrolase domain is found at 236–538 (LSVLMIQPDT…TGTRAFSIRL (303 aa)). The Proton acceptor role is filled by E285. K355 is an active-site residue. Catalysis depends on C446, which acts as the Nucleophile. The chain crosses the membrane as a helical span at residues 549–569 (FGNSFLWIFCILILISRLIFV).

This sequence belongs to the CN hydrolase family. Apolipoprotein N-acyltransferase subfamily.

The protein resides in the cell inner membrane. It catalyses the reaction N-terminal S-1,2-diacyl-sn-glyceryl-L-cysteinyl-[lipoprotein] + a glycerophospholipid = N-acyl-S-1,2-diacyl-sn-glyceryl-L-cysteinyl-[lipoprotein] + a 2-acyl-sn-glycero-3-phospholipid + H(+). The protein operates within protein modification; lipoprotein biosynthesis (N-acyl transfer). Functionally, catalyzes the phospholipid dependent N-acylation of the N-terminal cysteine of apolipoprotein, the last step in lipoprotein maturation. This chain is Apolipoprotein N-acyltransferase 1, found in Leptospira interrogans serogroup Icterohaemorrhagiae serovar copenhageni (strain Fiocruz L1-130).